The following is a 355-amino-acid chain: Peptide chain release factor 1 (355 aa).

Gln233 carries the post-translational modification N5-methylglutamine.

It belongs to the prokaryotic/mitochondrial release factor family. Post-translationally, methylated by PrmC. Methylation increases the termination efficiency of RF1.

The protein resides in the cytoplasm. Functionally, peptide chain release factor 1 directs the termination of translation in response to the peptide chain termination codons UAG and UAA. This chain is Peptide chain release factor 1, found in Bacillus anthracis.